We begin with the raw amino-acid sequence, 599 residues long: MTTQVPPSALLPLNPEQLARLQAATTDLTPTQLAWVSGYFWGVLNQQPAALAATPAPAAEMPGITIISASQTGNARRVAEALRDDLLTAKLNVKLVNAGDYKFKQIASEKLLIVVTSTQGEGEPPEEAVALHKFLFSKKAPKLENIAFAVFSLGDSSYEFFCQSGKDFDSKLAELGGERLLDRVDADVEYQTAASEWRARVVDALKSRAPVAAPSQSVATGAVNEIHTSPYSKDAPLVASLSVNQKITGRNSEKDVRHIEIDLGDSDLRYQPGDALGVWYQNDPALVTELVELLWLKGDEPVTVEGKTLPLNEALQWHFELTVNTANIVENYATLTRSETLLPLVGEKAKLQHYAATTPIVDMVRFSPAQLDAEALINLLRPLTPRLYSIASSQAEVENEVHVTVGVVRYDVEGRTRAGGASSFLADRVEEEGEVRVFIEHNDNFRLPANPETPVIMIGPGTGIAPFRAFMQQRAADEAPGKNWLFFGNPHFTEDFLYQVEWQRYVKEGVLTRIDLAWSRDQKEKVYVQDKLREQGAELWRWINDGAHIYVCGDANRMAKDVEQALLEVIAEFGGMDTEAADEFLSELRVERRYQRDVY.

The Flavodoxin-like domain occupies 64–202 (ITIISASQTG…AASEWRARVV (139 aa)). Residues 70 to 75 (SQTGNA), 117 to 120 (STQG), and 153 to 162 (LGDSSYEFFC) contribute to the FMN site. The FAD-binding FR-type domain maps to 234-448 (DAPLVASLSV…IEHNDNFRLP (215 aa)). FAD contacts are provided by residues threonine 322, alanine 356, 386 to 389 (RLYS), 404 to 406 (TVG), tyrosine 410, and 419 to 422 (GGAS). Residues 519–520 (SR), 525–529 (KVYVQ), and aspartate 561 contribute to the NADP(+) site. Tyrosine 599 contributes to the FAD binding site.

Belongs to the NADPH-dependent sulphite reductase flavoprotein subunit CysJ family. The protein in the N-terminal section; belongs to the flavodoxin family. It in the C-terminal section; belongs to the flavoprotein pyridine nucleotide cytochrome reductase family. In terms of assembly, alpha(8)-beta(8). The alpha component is a flavoprotein, the beta component is a hemoprotein. Requires FAD as cofactor. FMN serves as cofactor.

The catalysed reaction is hydrogen sulfide + 3 NADP(+) + 3 H2O = sulfite + 3 NADPH + 4 H(+). Its pathway is sulfur metabolism; hydrogen sulfide biosynthesis; hydrogen sulfide from sulfite (NADPH route): step 1/1. Functionally, component of the sulfite reductase complex that catalyzes the 6-electron reduction of sulfite to sulfide. This is one of several activities required for the biosynthesis of L-cysteine from sulfate. The flavoprotein component catalyzes the electron flow from NADPH -&gt; FAD -&gt; FMN to the hemoprotein component. The polypeptide is Sulfite reductase [NADPH] flavoprotein alpha-component (Shigella dysenteriae serotype 1 (strain Sd197)).